Consider the following 91-residue polypeptide: Small ribosomal subunit protein uS19 (91 aa).

This sequence belongs to the universal ribosomal protein uS19 family.

Functionally, protein S19 forms a complex with S13 that binds strongly to the 16S ribosomal RNA. In Actinobacillus pleuropneumoniae serotype 7 (strain AP76), this protein is Small ribosomal subunit protein uS19.